Reading from the N-terminus, the 69-residue chain is U2-agatoxin-Ao1c (69 aa).

A signal peptide spans 1-20 (MKAIISLLLISAMVFSMIEA). The propeptide occupies 21 to 34 (VPVEEGLQLFEGER). Intrachain disulfides connect Cys36–Cys52, Cys43–Cys57, and Cys51–Cys67. The residue at position 68 (Leu68) is a Leucine amide.

The protein belongs to the neurotoxin 01 (U2-agtx) family. As to expression, expressed by the venom gland.

The protein localises to the secreted. Functionally, insect active toxin causing rapid but reversible paralysis in crickets. No activity shown in mammals. Does not show effect on mammalian voltage-gated calcium channels. The chain is U2-agatoxin-Ao1c from Agelena orientalis (Funnel-web spider).